Here is a 235-residue protein sequence, read N- to C-terminus: Small ribosomal subunit protein uS10m (235 aa).

The N-terminal 19 residues, 1-19 (MLRTSVRSPLLYRCLSKRF), are a transit peptide targeting the mitochondrion.

The protein belongs to the universal ribosomal protein uS10 family. In terms of assembly, part of the mitochondrial small ribosomal subunit.

The protein localises to the mitochondrion. Its function is as follows. Involved in mitochondrial genome encoded proteins translation. Involved in the binding of tRNA to the ribosomes. The sequence is that of Small ribosomal subunit protein uS10m (RSM10) from Candida glabrata (strain ATCC 2001 / BCRC 20586 / JCM 3761 / NBRC 0622 / NRRL Y-65 / CBS 138) (Yeast).